The following is a 135-amino-acid chain: Universal stress protein Aq_178 (135 aa).

Belongs to the universal stress protein A family.

The polypeptide is Universal stress protein Aq_178 (Aquifex aeolicus (strain VF5)).